The primary structure comprises 94 residues: Phosphoribosyl-ATP pyrophosphatase (94 aa).

Belongs to the PRA-PH family.

Its subcellular location is the cytoplasm. The enzyme catalyses 1-(5-phospho-beta-D-ribosyl)-ATP + H2O = 1-(5-phospho-beta-D-ribosyl)-5'-AMP + diphosphate + H(+). Its pathway is amino-acid biosynthesis; L-histidine biosynthesis; L-histidine from 5-phospho-alpha-D-ribose 1-diphosphate: step 2/9. The sequence is that of Phosphoribosyl-ATP pyrophosphatase from Pyrobaculum arsenaticum (strain DSM 13514 / JCM 11321 / PZ6).